The sequence spans 181 residues: ATP synthase subunit delta (181 aa).

This sequence belongs to the ATPase delta chain family. In terms of assembly, F-type ATPases have 2 components, F(1) - the catalytic core - and F(0) - the membrane proton channel. F(1) has five subunits: alpha(3), beta(3), gamma(1), delta(1), epsilon(1). F(0) has three main subunits: a(1), b(2) and c(10-14). The alpha and beta chains form an alternating ring which encloses part of the gamma chain. F(1) is attached to F(0) by a central stalk formed by the gamma and epsilon chains, while a peripheral stalk is formed by the delta and b chains.

The protein resides in the cell inner membrane. F(1)F(0) ATP synthase produces ATP from ADP in the presence of a proton or sodium gradient. F-type ATPases consist of two structural domains, F(1) containing the extramembraneous catalytic core and F(0) containing the membrane proton channel, linked together by a central stalk and a peripheral stalk. During catalysis, ATP synthesis in the catalytic domain of F(1) is coupled via a rotary mechanism of the central stalk subunits to proton translocation. Its function is as follows. This protein is part of the stalk that links CF(0) to CF(1). It either transmits conformational changes from CF(0) to CF(1) or is implicated in proton conduction. In Chlorobium luteolum (strain DSM 273 / BCRC 81028 / 2530) (Pelodictyon luteolum), this protein is ATP synthase subunit delta.